The primary structure comprises 188 residues: Elongation factor P (188 aa).

The protein belongs to the elongation factor P family.

Its subcellular location is the cytoplasm. It participates in protein biosynthesis; polypeptide chain elongation. In terms of biological role, involved in peptide bond synthesis. Stimulates efficient translation and peptide-bond synthesis on native or reconstituted 70S ribosomes in vitro. Probably functions indirectly by altering the affinity of the ribosome for aminoacyl-tRNA, thus increasing their reactivity as acceptors for peptidyl transferase. In Exiguobacterium sibiricum (strain DSM 17290 / CCUG 55495 / CIP 109462 / JCM 13490 / 255-15), this protein is Elongation factor P.